We begin with the raw amino-acid sequence, 334 residues long: N-acetylmuramoyl-L-alanine amidase sle1 (334 aa).

The signal sequence occupies residues 1–25 (MQKKVIAAIIGTSAISAVAATQANA). The region spanning 27 to 70 (TTHTVKPGESVWAISNKYGISIAKLKSLNNLTSNLIFPNQVLKV) is the LysM 1 domain. A compositionally biased stretch (low complexity) spans 71-86 (SGSSNSTSNSSRPSTN). Residues 71 to 90 (SGSSNSTSNSSRPSTNSGGG) form a disordered region. One can recognise a LysM 2 domain in the interval 91–134 (SYYTVQAGDSLSLIASKYGTTYQNIMRLNGLNNFFIYPGQKLKV). Residues 137–156 (TASSSNSTSNSSRPSTNSSG) are disordered. Positions 158 to 201 (SYYTVQAGDSLSLIASKYGTTYQNIMRLNGLNNFFIYPGQKLKV) constitute a LysM 3 domain. In terms of domain architecture, Peptidase C51 spans 210–334 (GSTTTTNRGY…YQVNNYRYIH (125 aa)).

It localises to the secreted. It is found in the cell surface. It catalyses the reaction Hydrolyzes the link between N-acetylmuramoyl residues and L-amino acid residues in certain cell-wall glycopeptides.. Peptidoglycan hydrolase involved in the splitting of the septum during cell division. The protein is N-acetylmuramoyl-L-alanine amidase sle1 (sle1) of Staphylococcus aureus (strain MRSA252).